The following is a 361-amino-acid chain: Chorismate synthase (361 aa).

NADP(+) contacts are provided by Arg48 and Arg54. FMN is bound by residues 125–127, 238–239, Gly278, 293–297, and Arg319; these read RSS, NA, and KPTSS.

It belongs to the chorismate synthase family. As to quaternary structure, homotetramer. FMNH2 is required as a cofactor.

It carries out the reaction 5-O-(1-carboxyvinyl)-3-phosphoshikimate = chorismate + phosphate. It participates in metabolic intermediate biosynthesis; chorismate biosynthesis; chorismate from D-erythrose 4-phosphate and phosphoenolpyruvate: step 7/7. Functionally, catalyzes the anti-1,4-elimination of the C-3 phosphate and the C-6 proR hydrogen from 5-enolpyruvylshikimate-3-phosphate (EPSP) to yield chorismate, which is the branch point compound that serves as the starting substrate for the three terminal pathways of aromatic amino acid biosynthesis. This reaction introduces a second double bond into the aromatic ring system. The polypeptide is Chorismate synthase (Salmonella paratyphi A (strain ATCC 9150 / SARB42)).